The following is a 200-amino-acid chain: Dephospho-CoA kinase (200 aa).

A DPCK domain is found at 4 to 200; it reads VIGLTGGIGS…QKYIKMSHLY (197 aa). 12-17 contributes to the ATP binding site; the sequence is GSGKTT.

This sequence belongs to the CoaE family.

The protein localises to the cytoplasm. It catalyses the reaction 3'-dephospho-CoA + ATP = ADP + CoA + H(+). It functions in the pathway cofactor biosynthesis; coenzyme A biosynthesis; CoA from (R)-pantothenate: step 5/5. Its function is as follows. Catalyzes the phosphorylation of the 3'-hydroxyl group of dephosphocoenzyme A to form coenzyme A. This chain is Dephospho-CoA kinase, found in Photobacterium profundum (strain SS9).